Reading from the N-terminus, the 372-residue chain is Biotin synthase (372 aa).

Residues 73 to 308 enclose the Radical SAM core domain; it reads CCGNTVDLCS…QQIIRYAGGR (236 aa). 3 residues coordinate [4Fe-4S] cluster: cysteine 91, cysteine 95, and cysteine 98. [2Fe-2S] cluster-binding residues include cysteine 136, cysteine 173, cysteine 233, and arginine 303.

This sequence belongs to the radical SAM superfamily. Biotin synthase family. As to quaternary structure, homodimer. It depends on [4Fe-4S] cluster as a cofactor. The cofactor is [2Fe-2S] cluster.

The catalysed reaction is (4R,5S)-dethiobiotin + (sulfur carrier)-SH + 2 reduced [2Fe-2S]-[ferredoxin] + 2 S-adenosyl-L-methionine = (sulfur carrier)-H + biotin + 2 5'-deoxyadenosine + 2 L-methionine + 2 oxidized [2Fe-2S]-[ferredoxin]. It functions in the pathway cofactor biosynthesis; biotin biosynthesis; biotin from 7,8-diaminononanoate: step 2/2. Catalyzes the conversion of dethiobiotin (DTB) to biotin by the insertion of a sulfur atom into dethiobiotin via a radical-based mechanism. In Cyanothece sp. (strain PCC 7425 / ATCC 29141), this protein is Biotin synthase.